Here is a 282-residue protein sequence, read N- to C-terminus: Probable septum site-determining protein MinC (282 aa).

The interval 103-147 is disordered; that stretch reads SQSRRGGKDEAPKEKAGKPEATAASGQTDAEAAGNTGKGKDSEGA. Residues 104 to 120 show a composition bias toward basic and acidic residues; that stretch reads QSRRGGKDEAPKEKAGK.

The protein belongs to the MinC family. As to quaternary structure, interacts with MinD and FtsZ.

In terms of biological role, cell division inhibitor that blocks the formation of polar Z ring septums. Rapidly oscillates between the poles of the cell to destabilize FtsZ filaments that have formed before they mature into polar Z rings. Prevents FtsZ polymerization. The chain is Probable septum site-determining protein MinC from Cupriavidus metallidurans (strain ATCC 43123 / DSM 2839 / NBRC 102507 / CH34) (Ralstonia metallidurans).